Consider the following 227-residue polypeptide: 2-C-methyl-D-erythritol 4-phosphate cytidylyltransferase (227 aa).

The protein belongs to the IspD/TarI cytidylyltransferase family. IspD subfamily.

It carries out the reaction 2-C-methyl-D-erythritol 4-phosphate + CTP + H(+) = 4-CDP-2-C-methyl-D-erythritol + diphosphate. The protein operates within isoprenoid biosynthesis; isopentenyl diphosphate biosynthesis via DXP pathway; isopentenyl diphosphate from 1-deoxy-D-xylulose 5-phosphate: step 2/6. Its function is as follows. Catalyzes the formation of 4-diphosphocytidyl-2-C-methyl-D-erythritol from CTP and 2-C-methyl-D-erythritol 4-phosphate (MEP). In Lachnospira eligens (strain ATCC 27750 / DSM 3376 / VPI C15-48 / C15-B4) (Eubacterium eligens), this protein is 2-C-methyl-D-erythritol 4-phosphate cytidylyltransferase.